The primary structure comprises 951 residues: MADLSLLQEDLPEDADGLDVDDYSSESDVIIIPSALDFVSQDEMLTPLGRLDKYAASENVFNRQMVARSLLDTLREVCDDERDCIAVLERISRLADDSEPTVRAELMEQVPHIALFCQENRPSIPYAFSKYLLPIVVRYLADQNNQVRKTSQAALLALLEQELIERFDVETKVCPVLIDLTAPDSNDDVKTEAVAIMCKMAPMVGKDITERLILPRFCEMCCDCRMFHVRKVCAANFGDICSVVGQQATEEMLLPRFFQLCSDNVWGVRKACAECFMAVSCATCQEIRRTKLSALFINLISDPSRWVRQAAFQSLGPFISTFANPSSSGQCFKDESKSSEDSSAEDKDRMRDNDVVEEEHRRPEDAPSDLSAPHSSARLESLEGCAAKTPGHSAGDVPAPVDSSLLCTLSSESPQEAASNDENGRKPDTNSKSASRPDAGTSSPEATPLDQDMFNSFHFWRTPLPKIDLDKELQQDPEERLSPERTGDVPAAPLPGPPNITMATRKELEEMIENLEPHMDDPDVKAQVDVLSAALRASSLDAHEETGGVEQRSELQDEVCVSELPDCNISHDTCVPLISAAEENAEATPDYVHGGADVSPGDGFSPDEDRRPKVQDVVPQALLDQYLSMTDPSRAQTVDTEIAKHCAYSLPGVALTLGRQNWHCLRETYETLASDMQWKVRRTLAFSIHELAVILGDQLTAADLVPIFNGFLKDLDEVRIGVLKHLHDFLKLLHIDKRREYLYQLQEFLVTDNSRNWRFRAELAEQLILLLELYSPRDVYDYLRPIALNLCADKVSSVRWISYKLVSEMVKKLHTATPPTFGVDLINELVENFGRCPKWSGRQAFVFVCQTVIEDDCLPMDQFAVHLMPHLLTLANDRVPNVRVLLAKTLRQTLLEKEYFLASASCHQEAVEQTIMALQMDRDSDVKYFASIHPSSTKLSEDAMSTASSTY.

HEAT repeat units lie at residues 26-63 (ESDV…VFNR), 65-81 (MVAR…CDDE), 82-119 (RDCI…FCQE), 127-164 (AFSK…QELI), 168-206 (DVET…MVGK), 208-246 (ITER…VVGQ), 248-285 (ATEE…ATCQ), and 287-324 (IRRT…TFAN). 3 disordered regions span residues 325–377 (PSSS…HSSA), 411–451 (SESP…PLDQ), and 474–499 (QQDP…GPPN). Residues 332-365 (FKDESKSSEDSSAEDKDRMRDNDVVEEEHRRPED) show a composition bias toward basic and acidic residues. 2 stretches are compositionally biased toward polar residues: residues 411–421 (SESPQEAASND) and 430–445 (NSKS…SSPE). Over residues 474–487 (QQDPEERLSPERTG) the composition is skewed to basic and acidic residues. An HEAT 9 repeat occupies 506–543 (KELEEMIENLEPHMDDPDVKAQVDVLSAALRASSLDAH). A disordered region spans residues 590-612 (DYVHGGADVSPGDGFSPDEDRRP). 3 HEAT repeats span residues 699 to 735 (LTAA…LLHI), 800 to 838 (WISY…RCPK), and 862 to 899 (QFAV…EKEY). Ser-936 carries the post-translational modification Phosphoserine.

As to quaternary structure, serine/threonine-protein phosphatase 4 (PP4) occurs in different assemblies of the catalytic and one or more regulatory subunits. Component of the PP4 complex PPP4C-PPP4R1. Interacts with HDAC3.

Its function is as follows. Regulatory subunit of serine/threonine-protein phosphatase 4. May play a role in regulation of cell division in renal glomeruli. The PPP4C-PPP4R1 PP4 complex may play a role in dephosphorylation and regulation of HDAC3. Plays a role in the inhibition of TNF-induced NF-kappa-B activation by regulating the dephosphorylation of TRAF2. This is Serine/threonine-protein phosphatase 4 regulatory subunit 1 (Ppp4r1) from Mus musculus (Mouse).